Reading from the N-terminus, the 343-residue chain is Heat-inducible transcription repressor HrcA (343 aa).

This sequence belongs to the HrcA family.

Negative regulator of class I heat shock genes (grpE-dnaK-dnaJ and groELS operons). Prevents heat-shock induction of these operons. The chain is Heat-inducible transcription repressor HrcA from Mycobacterium marinum (strain ATCC BAA-535 / M).